The following is a 158-amino-acid chain: MQGRLSAWLVKHGLIHRSLGFDYQGIETLQIKPEAWHSIAVILYVYGYNYLRSQCAYDVAPGGLLASVYHLTRIECGIDQPEEVCIKVFVQGKILGIPSIFWVWKSADFQERESYDMLGISYYNHPRLKRILMPESWIGWPLRKDYIAPNFYEIQDAH.

The protein belongs to the complex I 30 kDa subunit family. In terms of assembly, NDH is composed of at least 16 different subunits, 5 of which are encoded in the nucleus.

It localises to the plastid. The protein localises to the chloroplast thylakoid membrane. It carries out the reaction a plastoquinone + NADH + (n+1) H(+)(in) = a plastoquinol + NAD(+) + n H(+)(out). The catalysed reaction is a plastoquinone + NADPH + (n+1) H(+)(in) = a plastoquinol + NADP(+) + n H(+)(out). Its function is as follows. NDH shuttles electrons from NAD(P)H:plastoquinone, via FMN and iron-sulfur (Fe-S) centers, to quinones in the photosynthetic chain and possibly in a chloroplast respiratory chain. The immediate electron acceptor for the enzyme in this species is believed to be plastoquinone. Couples the redox reaction to proton translocation, and thus conserves the redox energy in a proton gradient. The protein is NAD(P)H-quinone oxidoreductase subunit J, chloroplastic of Lupinus luteus (European yellow lupine).